Here is a 268-residue protein sequence, read N- to C-terminus: Putative esterase/lipase 2 (268 aa).

His-29 is an active-site residue. Catalysis depends on Ser-98, which acts as the Charge relay system.

It belongs to the lipase/esterase LIP3/BchO family.

The chain is Putative esterase/lipase 2 from Mycoplasma genitalium (strain ATCC 33530 / DSM 19775 / NCTC 10195 / G37) (Mycoplasmoides genitalium).